The following is a 138-amino-acid chain: Large ribosomal subunit protein bL19 (138 aa).

This sequence belongs to the bacterial ribosomal protein bL19 family.

Its function is as follows. This protein is located at the 30S-50S ribosomal subunit interface and may play a role in the structure and function of the aminoacyl-tRNA binding site. The chain is Large ribosomal subunit protein bL19 from Rickettsia rickettsii (strain Iowa).